The primary structure comprises 614 residues: Baeyer-Villiger monooxygenase peniC (614 aa).

Residues Glu-99, 107 to 110 (TWHW), Asp-119, and Tyr-125 each bind FAD. NADP(+) is bound by residues 255–261 (TGASGVQ), 278–279 (RT), and 398–399 (KR).

Belongs to the FAD-binding monooxygenase family. It depends on FAD as a cofactor.

It carries out the reaction gamma-lactone-2-keto[5.5.5.5]fenestrane + NADPH + O2 + H(+) = penifulvin A + NADP(+) + H2O. Its pathway is secondary metabolite biosynthesis; terpenoid biosynthesis. In terms of biological role, baeyer-Villiger monooxygenase; part of the gene cluster that mediates the biosynthesis of penifulvin A, a potent insecticidal sesquiterpene that features a [5.5.5.6]dioxafenestrane ring. Within the pathway, peniC is responsible for the final regioselective Baeyer-Villiger oxidation of gamma-lactone-2-keto[5.5.5.5]fenestran between C1 and C2 to form the delta-lactone moiety of penifulvin A. The first step of the pathway is performed by the sesquiterpene cyclase peniA that generates the angular triquinane scaffold silphinene via cyclization of the linear farnesyl pyrophosphate (FPP). The cytochrome P450 monooxygenase peniB and the flavin-dependent monooxygenase peniC then catalyze a series of oxidation reactions to transform silphinene into penifulvin A. The sequence is that of Baeyer-Villiger monooxygenase peniC from Penicillium patulum (Penicillium griseofulvum).